The primary structure comprises 141 residues: Large ribosomal subunit protein uL11 (141 aa).

The protein belongs to the universal ribosomal protein uL11 family. Part of the ribosomal stalk of the 50S ribosomal subunit. Interacts with L10 and the large rRNA to form the base of the stalk. L10 forms an elongated spine to which L12 dimers bind in a sequential fashion forming a multimeric L10(L12)X complex. Post-translationally, one or more lysine residues are methylated.

In terms of biological role, forms part of the ribosomal stalk which helps the ribosome interact with GTP-bound translation factors. In Lactobacillus delbrueckii subsp. bulgaricus (strain ATCC 11842 / DSM 20081 / BCRC 10696 / JCM 1002 / NBRC 13953 / NCIMB 11778 / NCTC 12712 / WDCM 00102 / Lb 14), this protein is Large ribosomal subunit protein uL11.